The primary structure comprises 566 residues: MDLHRAAFKMENSSYLPNPLASPALMVLASTAEASRDASIPCQQPRPFGVPVSVDKDVHIPFTNGSYTFASMYHRQGGVPGTFANRDFPPSLLHLHPQFAPPNLDCTPISMLNHSGVGAFRPFASTEDRESYQSAFTPAKRLKNCHDTESPHLRFSDADGKEYDFGTQLPSSSPGSLKVDDTGKKIFAVSGLISDREASSSPEDRNDRCKKKAAALFDSQAPICPICQVLLRPSELQEHMEQELEQLAQLPASKNSLLKDAMAPGTPKSLLLSASIKREGESPTASPHSSATDDLHHSDRYQTFLRVRANRQTRLNARIGKMKRRKQDEGQREGSCMAEDDAADIEHENSNRFEEYEWCGQKRIRATTLLEGGFRGSGFVMCSGKENPDSDADLDVDGDDTLEYGKPQYTEADVIPCTGEEPGEAKEREALRGAVLNGGPPSTRITPEFSKWASDEMPSTSNGESSKQEAMQKTCKNSDIEKITEDSAVTTFEALKARVRELERQLSRGDRYKCLICMDSYSMPLTSIQCWHVHCEECWLRTLGAKKLCPQCYTITAPGDLRRIYL.

Lysine 277 participates in a covalent cross-link: Glycyl lysine isopeptide (Lys-Gly) (interchain with G-Cter in SUMO2). The tract at residues 277 to 297 (KREGESPTASPHSSATDDLHH) is disordered. Phosphoserine is present on serine 390. Positions 485–513 (EDSAVTTFEALKARVRELERQLSRGDRYK) form a coiled coil. Residues 514–522 (CLICMDSYS) are required for targeting to the cytoplasm. Residues 514-553 (CLICMDSYSMPLTSIQCWHVHCEECWLRTLGAKKLCPQCY) form an RING-type zinc finger.

Interacts with SIN3B. Interacts with CTNNB1 (via Armadillo repeats 2-8). Interacts with USP7 (via MATH domain). Post-translationally, auto-ubiquitinated; leads to proteasomal degradation.

It is found in the cytoplasm. It catalyses the reaction S-ubiquitinyl-[E2 ubiquitin-conjugating enzyme]-L-cysteine + [acceptor protein]-L-lysine = [E2 ubiquitin-conjugating enzyme]-L-cysteine + N(6)-ubiquitinyl-[acceptor protein]-L-lysine.. The protein operates within protein modification; protein ubiquitination. Its function is as follows. E3 ubiquitin-protein ligase that promotes the ubiquitination and proteasomal degradation of SIN3B. Independently of its E3 ligase activity, acts as a CTNNB1 stabilizer through USP7-mediated deubiquitination of CTNNB1 promoting Wnt signaling. This chain is E3 ubiquitin-protein ligase RNF220 (RNF220), found in Bos taurus (Bovine).